Reading from the N-terminus, the 320-residue chain is uncharacterized protein (320 aa).

The tract at residues 1-40 (MDHPSTSSLPRKKVKAGVKKAGKKTGKKTTGKKKTTPSAI) is disordered. Residues 10-35 (PRKKVKAGVKKAGKKTGKKTTGKKKT) are compositionally biased toward basic residues. Residues 51–71 (LLVLLAVLSYLAALSLGLYIM) form a helical membrane-spanning segment. N-linked (GlcNAc...) asparagine glycans are attached at residues Asn-92, Asn-122, Asn-154, and Asn-167. The next 2 helical transmembrane spans lie at 186-206 (PLVH…AMTG) and 216-236 (MLVT…VTVL). Asn-247 is a glycosylation site (N-linked (GlcNAc...) asparagine). The helical transmembrane segment at 272 to 292 (VQGALVAIVAVFYLTMGVVFV) threads the bilayer.

It localises to the membrane. It participates in secondary metabolite biosynthesis; terpenoid biosynthesis. Functionally, part of the gene cluster that mediates the biosynthesis of an ophiobolin family sesterterpenoid. This is an uncharacterized protein from Aspergillus terreus.